Consider the following 225-residue polypeptide: Protein-L-isoaspartate O-methyltransferase (225 aa).

The active site involves Ser-63.

This sequence belongs to the methyltransferase superfamily. L-isoaspartyl/D-aspartyl protein methyltransferase family.

It localises to the cytoplasm. The catalysed reaction is [protein]-L-isoaspartate + S-adenosyl-L-methionine = [protein]-L-isoaspartate alpha-methyl ester + S-adenosyl-L-homocysteine. Its function is as follows. Catalyzes the methyl esterification of L-isoaspartyl residues in peptides and proteins that result from spontaneous decomposition of normal L-aspartyl and L-asparaginyl residues. It plays a role in the repair and/or degradation of damaged proteins. The sequence is that of Protein-L-isoaspartate O-methyltransferase from Staphylothermus marinus (strain ATCC 43588 / DSM 3639 / JCM 9404 / F1).